We begin with the raw amino-acid sequence, 273 residues long: Formamidopyrimidine-DNA glycosylase (273 aa).

Pro2 (schiff-base intermediate with DNA) is an active-site residue. The Proton donor role is filled by Glu3. Lys58 (proton donor; for beta-elimination activity) is an active-site residue. Residues His92, Arg111, and Lys153 each contribute to the DNA site. The FPG-type zinc-finger motif lies at 238-272; that stretch reads MVYARDGQECLSCSSSIIKTKHSGRSTFYCKSCQK. Catalysis depends on Arg262, which acts as the Proton donor; for delta-elimination activity.

This sequence belongs to the FPG family. As to quaternary structure, monomer. Zn(2+) is required as a cofactor.

The catalysed reaction is Hydrolysis of DNA containing ring-opened 7-methylguanine residues, releasing 2,6-diamino-4-hydroxy-5-(N-methyl)formamidopyrimidine.. It carries out the reaction 2'-deoxyribonucleotide-(2'-deoxyribose 5'-phosphate)-2'-deoxyribonucleotide-DNA = a 3'-end 2'-deoxyribonucleotide-(2,3-dehydro-2,3-deoxyribose 5'-phosphate)-DNA + a 5'-end 5'-phospho-2'-deoxyribonucleoside-DNA + H(+). Involved in base excision repair of DNA damaged by oxidation or by mutagenic agents. Acts as a DNA glycosylase that recognizes and removes damaged bases. Has a preference for oxidized purines, such as 7,8-dihydro-8-oxoguanine (8-oxoG). Has AP (apurinic/apyrimidinic) lyase activity and introduces nicks in the DNA strand. Cleaves the DNA backbone by beta-delta elimination to generate a single-strand break at the site of the removed base with both 3'- and 5'-phosphates. The sequence is that of Formamidopyrimidine-DNA glycosylase from Rickettsia bellii (strain OSU 85-389).